A 689-amino-acid polypeptide reads, in one-letter code: MQNIYLISEKEAKKLLKELADKIERYNHAYYIENNHLVSDAEYDQLFNTNLKLEQKFPHLILENSPSKKVGAKIANKFAKVTHQAPMLSLSNVFDEQDVKDFVDRIKNFLRLNEFAPIFCEPKIDGLSFSAIYKNGLLTIGATRGDGYIGEDMTANIKTIKNFPHKINNAPEFLEVRGEIYIEKQDFFNLNKEQEEQGRDKFANPRNAAAGSLRQLDSSVTAKRPLKYFVYSGGATEQNIASSQNELLKKLKEFGFRVNEISKLADSEEEIFAFYEYLKTNRENLSYEIDGVVYKLNDFALQNRMGFIARAPRFATAHKFPAIVGQTKLLSITVQVGRTGTLTPVAELEPIEIGGVTVSRATLHNFQEIIRKDVRIRDYVFLQRAGDVIPQIIGVDIGKRSTDATTFNTPLFCPSCNSKLHYIPEDIIIRCDNVLNCPAQNYERIRHFVSKNAMDIEGLGRKQVEFLIDKGLISNPLDIFLLKEKNEASLTKLENMDGWGRKSVENLFKNIEESRNVSLPRFIYALGIRHIGEQNAKLLAREFESYNNFISQIELLSKNDSNIYQKLNNLEGIGDKILVDIINFFDVKENIELIKKLGEVLNIEDYKETKEHSSLTGKIVVFTGSLPTTSRVEAKAMAEKLGAKVAVSVSSNTDLVIAGVDAGSKLKKAKELGIKIIDEEEWLTIVNNV.

NAD(+)-binding positions include 40–44 (DAEYD), 89–90 (SL), and glutamate 121. The N6-AMP-lysine intermediate role is filled by lysine 123. NAD(+) contacts are provided by arginine 144, glutamate 179, lysine 295, and lysine 319. Zn(2+) contacts are provided by cysteine 413, cysteine 416, cysteine 431, and cysteine 437. Residues 610–689 (KEHSSLTGKI…EEWLTIVNNV (80 aa)) enclose the BRCT domain.

This sequence belongs to the NAD-dependent DNA ligase family. LigA subfamily. Mg(2+) is required as a cofactor. It depends on Mn(2+) as a cofactor.

The catalysed reaction is NAD(+) + (deoxyribonucleotide)n-3'-hydroxyl + 5'-phospho-(deoxyribonucleotide)m = (deoxyribonucleotide)n+m + AMP + beta-nicotinamide D-nucleotide.. In terms of biological role, DNA ligase that catalyzes the formation of phosphodiester linkages between 5'-phosphoryl and 3'-hydroxyl groups in double-stranded DNA using NAD as a coenzyme and as the energy source for the reaction. It is essential for DNA replication and repair of damaged DNA. The polypeptide is DNA ligase (Rickettsia canadensis (strain McKiel)).